Here is a 533-residue protein sequence, read N- to C-terminus: Glucose-6-phosphate isomerase (533 aa).

The Proton donor role is filled by E341. Active-site residues include H372 and K501.

It belongs to the GPI family.

The protein resides in the cytoplasm. It carries out the reaction alpha-D-glucose 6-phosphate = beta-D-fructose 6-phosphate. It participates in carbohydrate biosynthesis; gluconeogenesis. Its pathway is carbohydrate degradation; glycolysis; D-glyceraldehyde 3-phosphate and glycerone phosphate from D-glucose: step 2/4. In terms of biological role, catalyzes the reversible isomerization of glucose-6-phosphate to fructose-6-phosphate. In Cereibacter sphaeroides (strain KD131 / KCTC 12085) (Rhodobacter sphaeroides), this protein is Glucose-6-phosphate isomerase.